The sequence spans 167 residues: Thioredoxin-like protein HI_1115 (167 aa).

The helical transmembrane segment at 10–27 threads the bilayer; sequence GLSLFLTFIVITSILDFV. In terms of domain architecture, Thioredoxin spans 30 to 167; that stretch reads PVVPEEINKI…VRLFFAEFFG (138 aa). C69 and C72 form a disulfide bridge.

This sequence belongs to the thioredoxin family.

The protein localises to the cell membrane. The polypeptide is Thioredoxin-like protein HI_1115 (Haemophilus influenzae (strain ATCC 51907 / DSM 11121 / KW20 / Rd)).